Consider the following 97-residue polypeptide: Large ribosomal subunit protein bL28 (97 aa).

It belongs to the bacterial ribosomal protein bL28 family.

The protein is Large ribosomal subunit protein bL28 of Sphingopyxis alaskensis (strain DSM 13593 / LMG 18877 / RB2256) (Sphingomonas alaskensis).